The chain runs to 82 residues: DNA-directed RNA polymerase subunit Rpo5 (82 aa).

Belongs to the archaeal Rpo5/eukaryotic RPB5 RNA polymerase subunit family. Part of the RNA polymerase complex.

It is found in the cytoplasm. The enzyme catalyses RNA(n) + a ribonucleoside 5'-triphosphate = RNA(n+1) + diphosphate. Functionally, DNA-dependent RNA polymerase (RNAP) catalyzes the transcription of DNA into RNA using the four ribonucleoside triphosphates as substrates. In Thermococcus kodakarensis (strain ATCC BAA-918 / JCM 12380 / KOD1) (Pyrococcus kodakaraensis (strain KOD1)), this protein is DNA-directed RNA polymerase subunit Rpo5.